We begin with the raw amino-acid sequence, 310 residues long: Protoheme IX farnesyltransferase (310 aa).

The next 9 helical transmembrane spans lie at 37-57 (LITVFAGYVVAASYLTDDVLL), 64-84 (LTLLWTLLGSGLVIAGSCYLN), 113-133 (ILALGLGILATGTVLLLIVNH), 134-154 (VAAVFGLIGSFVYVVIYTMWL), 159-181 (TINTVVGGISGAVPPIIGFAAVT), 186-208 (IDAWILFLIMFVWQPPHFLALAM), 215-237 (RAAGIPMLPVVNGFAITKRQIVW), 257-277 (MLVMAVLGGYWLYMGLKGLKI), and 290-310 (MFFFSLFYFTAWIVTVVLVSL).

This sequence belongs to the UbiA prenyltransferase family. Protoheme IX farnesyltransferase subfamily. Interacts with CtaA.

The protein resides in the cell membrane. It catalyses the reaction heme b + (2E,6E)-farnesyl diphosphate + H2O = Fe(II)-heme o + diphosphate. It functions in the pathway porphyrin-containing compound metabolism; heme O biosynthesis; heme O from protoheme: step 1/1. Its function is as follows. Converts heme B (protoheme IX) to heme O by substitution of the vinyl group on carbon 2 of heme B porphyrin ring with a hydroxyethyl farnesyl side group. This Exiguobacterium sibiricum (strain DSM 17290 / CCUG 55495 / CIP 109462 / JCM 13490 / 255-15) protein is Protoheme IX farnesyltransferase.